The sequence spans 516 residues: MAAGMVATMVLLTCLAAGGLVVGAEEDGGGGGLGRLGSPDYGDALAKAILFFEGQRSGRLPANQRATWRGDSALTDGREENVNLTGGYYDAGDNVKFGYPMAFTVTLLGWSAVEYGAAVAAAGELGNLRAAIRWGADFLLRAHASPTTLYTQVGDGNADHQCWERPEDMDTPRTLYKITADSPGSEAAAEASAALAAAYVALKDDGDTAFSSRLLAASRSLFDFANNYRGSFQSSCPFYCSYSGFQDELLWASAWLFKATRDAKYLDFLTNNQGSSNPVNEFSWDNKYAGAQMLAAQEYLGGRTQLARYKDNLDSFVCALMPNSGNVQIRTTPGGLLFTRDSVNLQYTTTATLVLSIYSKVLKSSGSRGVRCSAATFSPNQISSFATSQVDYILGKNPLGMSYMVGFSTKFPRRIHHRGSSIPSIKVLSRKVTCKEGFSSWLPTSDPNPNIHVGAIVGGPDGNDQFSDNRGDSSHSEPATYINAAFVGACAAAMGQKQVVKLEEPADNLESMVSTY.

The N-terminal stretch at 1-23 (MAAGMVATMVLLTCLAAGGLVVG) is a signal peptide. Asn-83 carries an N-linked (GlcNAc...) asparagine glycan. The active-site Nucleophile is Asp-93. Catalysis depends on residues His-416, Asp-468, and Glu-477.

This sequence belongs to the glycosyl hydrolase 9 (cellulase E) family.

It is found in the secreted. The enzyme catalyses Endohydrolysis of (1-&gt;4)-beta-D-glucosidic linkages in cellulose, lichenin and cereal beta-D-glucans.. The sequence is that of Endoglucanase 20 (GLU15) from Oryza sativa subsp. japonica (Rice).